The chain runs to 226 residues: Ribose-5-phosphate isomerase A (226 aa).

Substrate-binding positions include 32-35 (TGST), 85-88 (DGAD), and 98-101 (KGGG). Glu-107 (proton acceptor) is an active-site residue. Lys-125 contributes to the substrate binding site.

Belongs to the ribose 5-phosphate isomerase family. In terms of assembly, homodimer.

It catalyses the reaction aldehydo-D-ribose 5-phosphate = D-ribulose 5-phosphate. It participates in carbohydrate degradation; pentose phosphate pathway; D-ribose 5-phosphate from D-ribulose 5-phosphate (non-oxidative stage): step 1/1. Functionally, catalyzes the reversible conversion of ribose-5-phosphate to ribulose 5-phosphate. The sequence is that of Ribose-5-phosphate isomerase A from Saccharophagus degradans (strain 2-40 / ATCC 43961 / DSM 17024).